Consider the following 388-residue polypeptide: Oxytocin receptor (388 aa).

Residues 1-38 (MEGTPAANWSIELDLGSGVPPGAEGNLTAGPPRRNEAL) are Extracellular-facing. N8 and N26 each carry an N-linked (GlcNAc...) asparagine glycan. A helical membrane pass occupies residues 39–63 (ARVEVAVLCLILFLALSGNACVLLA). The Cytoplasmic portion of the chain corresponds to 64-74 (LRTTRHKHSRL). A helical membrane pass occupies residues 75–97 (FFFMKHLSIADLVVAVFQVLPQL). Residues 98 to 113 (LWDITFRFYGPDLLCR) are Extracellular-facing. An intrachain disulfide couples C112 to C187. Residues 114–135 (LVKYLQVVGMFASTYLLLLMSL) traverse the membrane as a helical segment. Residues 136–154 (DRCLAICQPLRSLRRRTDR) are Cytoplasmic-facing. Residues 155-175 (LAVLATWLGCLVASVPQVHIF) form a helical membrane-spanning segment. The Extracellular portion of the chain corresponds to 176–202 (SLREVADGVFDCWAVFIQPWGPKAYVT). The helical transmembrane segment at 203–225 (WITLAVYIVPVIVLAACYGLISF) threads the bilayer. The Cytoplasmic segment spans residues 226–274 (KIWQNLRLKTAAAAAAAEGSDAAGGAGRAALARVSSVKLISKAKIRTVK). A helical membrane pass occupies residues 275–293 (MTFIIVLAFIVCWTPFFFV). Residues 294-308 (QMWSVWDVNAPKEAS) are Extracellular-facing. The helical transmembrane segment at 309–331 (AFIIAMLLASLNSCCNPWIYMLF) threads the bilayer. The Cytoplasmic portion of the chain corresponds to 332–388 (TGHLFHELVQRFLCCSARYLKGSRPGETSISKKSNSSTFVLSRRSSSQRSCSQPSSA). The segment at 354–388 (SRPGETSISKKSNSSTFVLSRRSSSQRSCSQPSSA) is disordered. Phosphoserine occurs at positions 365 and 367. The segment covering 365 to 388 (SNSSTFVLSRRSSSQRSCSQPSSA) has biased composition (low complexity).

It belongs to the G-protein coupled receptor 1 family. Vasopressin/oxytocin receptor subfamily.

It is found in the cell membrane. Receptor for oxytocin. The activity of this receptor is mediated by G proteins which activate a phosphatidylinositol-calcium second messenger system. This is Oxytocin receptor (Oxtr) from Mus musculus (Mouse).